The chain runs to 305 residues: MTLRTLQAGVAVSIALDRVCFFCYNGAVAHCVVEAAEDILDRRFSVLDKGFVRLIDYLGGDARIVQAARVSYGAGTRTARDDAALIDFLLRNKHTSPFEQVVLTFHVRAPIFVARQWMRHRTARISEVSSRYSLLSHDCYVPQETSVAVQSTRNKQGRASEGISPEQQQEVRAAFEAQQKAACAAYDALIQKNIARELARINVPLSLYTEWYWQIDLHNLFHFLRLRASAHAQAEIRAYAEVIIEITRAVAPCATASFENHEKDGVQFSGREFAALKALLAGEGLSLEGKERARFEEKLRSGLQQ.

Residues 50–261 (GFVRLIDYLG…PCATASFENH (212 aa)) enclose the ThyX domain. FAD-binding positions include Ser96, 119–121 (RHR), and Glu127. Residues 116–119 (QWMR), 127–131 (EVSSR), and Arg200 contribute to the dUMP site. Residues 119 to 129 (RHRTARISEVS) carry the ThyX motif motif. Residues 216–218 (DLH) and His222 contribute to the FAD site. Arg227 contributes to the dUMP binding site. Arg227 (involved in ionization of N3 of dUMP, leading to its activation) is an active-site residue.

Belongs to the thymidylate synthase ThyX family. Homotetramer. It depends on FAD as a cofactor.

The enzyme catalyses dUMP + (6R)-5,10-methylene-5,6,7,8-tetrahydrofolate + NADPH + H(+) = dTMP + (6S)-5,6,7,8-tetrahydrofolate + NADP(+). Its pathway is pyrimidine metabolism; dTTP biosynthesis. In terms of biological role, catalyzes the reductive methylation of 2'-deoxyuridine-5'-monophosphate (dUMP) to 2'-deoxythymidine-5'-monophosphate (dTMP) while utilizing 5,10-methylenetetrahydrofolate (mTHF) as the methyl donor, and NADPH and FADH(2) as the reductant. This is Flavin-dependent thymidylate synthase from Treponema pallidum (strain Nichols).